Consider the following 331-residue polypeptide: Ribosomal RNA small subunit methyltransferase H (331 aa).

S-adenosyl-L-methionine contacts are provided by residues Gly-39–Tyr-41, Asp-56, Phe-83, Asp-100, and Gln-107.

Belongs to the methyltransferase superfamily. RsmH family.

The protein resides in the cytoplasm. It catalyses the reaction cytidine(1402) in 16S rRNA + S-adenosyl-L-methionine = N(4)-methylcytidine(1402) in 16S rRNA + S-adenosyl-L-homocysteine + H(+). Its function is as follows. Specifically methylates the N4 position of cytidine in position 1402 (C1402) of 16S rRNA. In Bartonella bacilliformis (strain ATCC 35685 / KC583 / Herrer 020/F12,63), this protein is Ribosomal RNA small subunit methyltransferase H.